Here is a 131-residue protein sequence, read N- to C-terminus: Profilin-3 (131 aa).

The protein belongs to the profilin family. Occurs in many kinds of cells as a complex with monomeric actin in a 1:1 ratio.

It is found in the cytoplasm. The protein resides in the cytoskeleton. Functionally, binds to actin and affects the structure of the cytoskeleton. At high concentrations, profilin prevents the polymerization of actin, whereas it enhances it at low concentrations. By binding to PIP2, it inhibits the formation of IP3 and DG. This chain is Profilin-3 (PRO3), found in Triticum aestivum (Wheat).